Consider the following 570-residue polypeptide: Urease subunit alpha (570 aa).

A Urease domain is found at 131–570 (GGFDSHIHFI…LPLAQRYFMF (440 aa)). Residues H136, H138, and K219 each contribute to the Ni(2+) site. Position 219 is an N6-carboxylysine (K219). A substrate-binding site is contributed by H221. Ni(2+)-binding residues include H248 and H274. H322 acts as the Proton donor in catalysis. D362 lines the Ni(2+) pocket.

The protein belongs to the metallo-dependent hydrolases superfamily. Urease alpha subunit family. Heterotrimer of UreA (gamma), UreB (beta) and UreC (alpha) subunits. Three heterotrimers associate to form the active enzyme. Requires Ni cation as cofactor. Carboxylation allows a single lysine to coordinate two nickel ions.

The protein resides in the cytoplasm. It carries out the reaction urea + 2 H2O + H(+) = hydrogencarbonate + 2 NH4(+). The protein operates within nitrogen metabolism; urea degradation; CO(2) and NH(3) from urea (urease route): step 1/1. This chain is Urease subunit alpha, found in Rhodopseudomonas palustris (strain ATCC BAA-98 / CGA009).